The following is a 406-amino-acid chain: Elongation factor Ts, mitochondrial (406 aa).

A disordered region spans residues 387–406 (ARPSDETSFADQVKEAAGLA).

This sequence belongs to the EF-Ts family.

Its subcellular location is the mitochondrion. Functionally, associates with the EF-Tu.GDP complex and induces the exchange of GDP to GTP. It remains bound to the aminoacyl-tRNA.EF-Tu.GTP complex up to the GTP hydrolysis stage on the ribosome. This Malassezia globosa (strain ATCC MYA-4612 / CBS 7966) (Dandruff-associated fungus) protein is Elongation factor Ts, mitochondrial.